The following is an 868-amino-acid chain: DNA mismatch repair protein MutS (868 aa).

621-628 (GPNMGGKS) contacts ATP. The tract at residues 803 to 852 (LESGDGGDTGSAQLPLFGPEPVFPPPAQPEPEPDPIREAVENLDPDGLTP) is disordered. Pro residues predominate over residues 823–832 (PVFPPPAQPE).

The protein belongs to the DNA mismatch repair MutS family.

Functionally, this protein is involved in the repair of mismatches in DNA. It is possible that it carries out the mismatch recognition step. This protein has a weak ATPase activity. In Halorhodospira halophila (strain DSM 244 / SL1) (Ectothiorhodospira halophila (strain DSM 244 / SL1)), this protein is DNA mismatch repair protein MutS.